The following is a 347-amino-acid chain: Ribosomal RNA small subunit methyltransferase C (347 aa).

It belongs to the methyltransferase superfamily. RsmC family. In terms of assembly, monomer.

Its subcellular location is the cytoplasm. It carries out the reaction guanosine(1207) in 16S rRNA + S-adenosyl-L-methionine = N(2)-methylguanosine(1207) in 16S rRNA + S-adenosyl-L-homocysteine + H(+). In terms of biological role, specifically methylates the guanine in position 1207 of 16S rRNA in the 30S particle. This Shewanella baltica (strain OS195) protein is Ribosomal RNA small subunit methyltransferase C.